We begin with the raw amino-acid sequence, 560 residues long: MAAVVNYSPPWWVNLFHRLPHFNLQFQQTSSDFRPDDSDYQKAVLLLGAAALVCLALDLLFLLFYSFWLCCCRRKNHDSPNADCCCTAWCVIIATLVCSAGIAVGFYGNGETCDGVTRLTYSLRHANQTVAGIDKLVSESTSSLNETLMEGLVQLETVYSKQTDYLSIVQKLQGQLDELINLMLGVPFWSSNDLSLDHLASITEQYDWYRWLGYLGLLLFDVIICLLVLVGLIRNSRSILIGVCFLGVLTLVISWASLGLEFSFAVGASDFCVSPDSYITKVTRENAVINQDILQYYLKCSMGQTNPFQQKLSGSHKALVEMQDDVSELLRSAIRDFPKTKSNLEEMQGVLNSTEVSLHHLTALVDCRSLHMDYVQALTGLCYDGVEGLIYLVLFSFVTALMFSSIVCSVPHTWQSKRSEEEDGDETSATLGSRAPHDNLYRVHMPSLYSCGSSTYGNEASLPAAAHTVSNAPVTEYMSQNANFQTPRCENTPLIGRESPPPSYTSSMRAKYLATSRPDQPRPTESQNGLEPNMRPDLTSRSAPNSRPNSAIHRPHSAIH.

Over 1-43 (MAAVVNYSPPWWVNLFHRLPHFNLQFQQTSSDFRPDDSDYQKA) the chain is Extracellular. The helical transmembrane segment at 44-64 (VLLLGAAALVCLALDLLFLLF) threads the bilayer. Residues 65–87 (YSFWLCCCRRKNHDSPNADCCCT) are Cytoplasmic-facing. The helical transmembrane segment at 88 to 108 (AWCVIIATLVCSAGIAVGFYG) threads the bilayer. Residues 109 to 212 (NGETCDGVTR…TEQYDWYRWL (104 aa)) lie on the Extracellular side of the membrane. 2 residues coordinate Ca(2+): Glu111 and Asp114. 2 N-linked (GlcNAc...) asparagine glycosylation sites follow: Asn127 and Asn145. The chain crosses the membrane as a helical span at residues 213-233 (GYLGLLLFDVIICLLVLVGLI). Over 234–238 (RNSRS) the chain is Cytoplasmic. A helical transmembrane segment spans residues 239 to 259 (ILIGVCFLGVLTLVISWASLG). Residues 260 to 387 (LEFSFAVGAS…LTGLCYDGVE (128 aa)) are Extracellular-facing. 2 disulfides stabilise this stretch: Cys272-Cys382 and Cys300-Cys367. Residue Asn352 is glycosylated (N-linked (GlcNAc...) asparagine). A helical transmembrane segment spans residues 388 to 408 (GLIYLVLFSFVTALMFSSIVC). Residues 409–560 (SVPHTWQSKR…AIHRPHSAIH (152 aa)) are Cytoplasmic-facing. 2 disordered regions span residues 415-435 (QSKR…GSRA) and 486-560 (TPRC…SAIH). Residues 539-549 (TSRSAPNSRPN) show a composition bias toward polar residues.

It belongs to the tweety family. As to quaternary structure, homotetramer; disulfide-linked. Forms cis-homodimers in the presence of Ca(2+).

It localises to the cell membrane. It catalyses the reaction chloride(in) = chloride(out). The enzyme catalyses L-glutamate(out) = L-glutamate(in). May act as a calcium-independent, swelling-dependent volume-regulated anion channel (VRAC-swell) which plays a pivotal role in the process of regulatory volume decrease (RVD) in the brain through the efflux of anions like chloride and organic osmolytes like glutamate. Probable large-conductance Ca(2+)-activated chloride channel. The polypeptide is Protein tweety homolog 3 (ttyh3b) (Danio rerio (Zebrafish)).